The following is a 472-amino-acid chain: ATP synthase subunit beta (472 aa).

G157–T164 provides a ligand contact to ATP.

It belongs to the ATPase alpha/beta chains family. F-type ATPases have 2 components, CF(1) - the catalytic core - and CF(0) - the membrane proton channel. CF(1) has five subunits: alpha(3), beta(3), gamma(1), delta(1), epsilon(1). CF(0) has three main subunits: a(1), b(2) and c(9-12). The alpha and beta chains form an alternating ring which encloses part of the gamma chain. CF(1) is attached to CF(0) by a central stalk formed by the gamma and epsilon chains, while a peripheral stalk is formed by the delta and b chains.

The protein resides in the cell membrane. It catalyses the reaction ATP + H2O + 4 H(+)(in) = ADP + phosphate + 5 H(+)(out). Functionally, produces ATP from ADP in the presence of a proton gradient across the membrane. The catalytic sites are hosted primarily by the beta subunits. The protein is ATP synthase subunit beta of Desulforamulus reducens (strain ATCC BAA-1160 / DSM 100696 / MI-1) (Desulfotomaculum reducens).